The chain runs to 140 residues: Nucleoside diphosphate kinase (140 aa).

Positions 11, 59, 87, 93, 104, and 114 each coordinate ATP. The Pros-phosphohistidine intermediate role is filled by histidine 117.

The protein belongs to the NDK family. Homotetramer. It depends on Mg(2+) as a cofactor.

The protein resides in the cytoplasm. It carries out the reaction a 2'-deoxyribonucleoside 5'-diphosphate + ATP = a 2'-deoxyribonucleoside 5'-triphosphate + ADP. The enzyme catalyses a ribonucleoside 5'-diphosphate + ATP = a ribonucleoside 5'-triphosphate + ADP. Major role in the synthesis of nucleoside triphosphates other than ATP. The ATP gamma phosphate is transferred to the NDP beta phosphate via a ping-pong mechanism, using a phosphorylated active-site intermediate. This chain is Nucleoside diphosphate kinase, found in Rhizobium rhizogenes (strain K84 / ATCC BAA-868) (Agrobacterium radiobacter).